Here is a 70-residue protein sequence, read N- to C-terminus: U2-agatoxin-Ao1n (70 aa).

A signal peptide spans 1 to 20 (MRAIISLLLISAMVFYIIAA). A propeptide spanning residues 21–34 (VPEEEGLQLSEDER) is cleaved from the precursor. Cystine bridges form between cysteine 37–cysteine 53, cysteine 44–cysteine 58, and cysteine 52–cysteine 68. Position 69 is a leucine amide (leucine 69).

The protein belongs to the neurotoxin 01 (U2-agtx) family. In terms of tissue distribution, expressed by the venom gland.

It localises to the secreted. Its function is as follows. Insect active toxin causing rapid but reversible paralysis in crickets. No activity shown in mammals. Does not show effect on mammalian voltage-gated calcium channels. The chain is U2-agatoxin-Ao1n from Agelena orientalis (Funnel-web spider).